The chain runs to 120 residues: U13-lycotoxin-Ls1f (120 aa).

Positions 1–16 are cleaved as a signal peptide; sequence MKILFVLISILYAVYC. A propeptide spanning residues 17-54 is cleaved from the precursor; it reads FSSEEDVDSAYLANELEPVEDINSEQYAALEPKEEQER. 4 disulfides stabilise this stretch: C56–C70, C63–C76, C69–C87, and C78–C85. The Agouti domain occupies 56–95; the sequence is CAGMGQDCKDDCDCCLNIATCNCWFGRYFCSCTFGDYQTC.

This sequence belongs to the neurotoxin 05 (agouti) family. Contains 6 disulfide bonds. Expressed by the venom gland.

It is found in the secreted. The protein is U13-lycotoxin-Ls1f of Lycosa singoriensis (Wolf spider).